The chain runs to 193 residues: Protein SPEAR3 (193 aa).

Disordered regions lie at residues 1-50 and 85-104; these read MGSS…GVAQ and GYPS…SSPP. Over residues 14-26 the composition is skewed to low complexity; the sequence is SSSSSPTSSSSSP. The short motif at 44–52 is the SPL element; sequence RGLGVAQLE. The span at 86 to 101 shows a compositional bias: low complexity; the sequence is YPSIPSSSPSFSYASS. The EAR motif lies at 187 to 193; sequence LDLELRL.

Interacts with TPL and the TPR corepressors TPR1, TPR2, TPR3, TPR4, and with the TCP transcription factors TCP2, TCP3, TCP4, TCP5, TCP10, TCP13, TCP17 and TCP24. Interacts with SPL and SPEAR2. In terms of tissue distribution, expressed in shoot apical meristem, cotyledons and leaves. Detected at the leaf margins and in the vascular bundles at the base of the leaves.

Its subcellular location is the nucleus. Transcriptional regulator of leaf development. Acts as an adapter-like transcriptional repressor recruiting TPL/TPR corepressors to inhibit the CIN-like TCP transcription factors. This is Protein SPEAR3 from Arabidopsis thaliana (Mouse-ear cress).